We begin with the raw amino-acid sequence, 422 residues long: Tyrosine--tRNA ligase (422 aa).

Position 35 (Tyr-35) interacts with L-tyrosine. The short motif at 40–49 (PTAASLHVGH) is the 'HIGH' region element. Positions 169 and 173 each coordinate L-tyrosine. The short motif at 229–233 (KFGKT) is the 'KMSKS' region element. Lys-232 serves as a coordination point for ATP. One can recognise an S4 RNA-binding domain in the interval 352-418 (VRLAQLFADT…GKKSLASVAV (67 aa)).

Belongs to the class-I aminoacyl-tRNA synthetase family. TyrS type 1 subfamily. In terms of assembly, homodimer.

The protein resides in the cytoplasm. It carries out the reaction tRNA(Tyr) + L-tyrosine + ATP = L-tyrosyl-tRNA(Tyr) + AMP + diphosphate + H(+). Its function is as follows. Catalyzes the attachment of tyrosine to tRNA(Tyr) in a two-step reaction: tyrosine is first activated by ATP to form Tyr-AMP and then transferred to the acceptor end of tRNA(Tyr). This Kineococcus radiotolerans (strain ATCC BAA-149 / DSM 14245 / SRS30216) protein is Tyrosine--tRNA ligase.